The chain runs to 72 residues: Translation initiation factor IF-1 (72 aa).

Residues 1–72 (MSKDDCIEFE…TKGRIIYRMK (72 aa)) form the S1-like domain.

The protein belongs to the IF-1 family. In terms of assembly, component of the 30S ribosomal translation pre-initiation complex which assembles on the 30S ribosome in the order IF-2 and IF-3, IF-1 and N-formylmethionyl-tRNA(fMet); mRNA recruitment can occur at any time during PIC assembly.

The protein localises to the cytoplasm. In terms of biological role, one of the essential components for the initiation of protein synthesis. Stabilizes the binding of IF-2 and IF-3 on the 30S subunit to which N-formylmethionyl-tRNA(fMet) subsequently binds. Helps modulate mRNA selection, yielding the 30S pre-initiation complex (PIC). Upon addition of the 50S ribosomal subunit IF-1, IF-2 and IF-3 are released leaving the mature 70S translation initiation complex. The polypeptide is Translation initiation factor IF-1 (Xylella fastidiosa (strain 9a5c)).